The chain runs to 246 residues: DNA repair protein RecO (246 aa).

It belongs to the RecO family.

Its function is as follows. Involved in DNA repair and RecF pathway recombination. This chain is DNA repair protein RecO, found in Methylorubrum populi (strain ATCC BAA-705 / NCIMB 13946 / BJ001) (Methylobacterium populi).